The following is a 190-amino-acid chain: MIGKLTGTLLEKNPPEVLVDCGGVGYEVQVPMSTFYNLPASGAKVSLLTHFVVREDAQLLYGFGTHSERQAFRELIKITGIGPRMALSVLSGMSVEDLAQAVTLQEVGRLVKVPGIGKKTAERLLLELKGKIGADTGAQSLFVNNDQNDIVQALMALGYSDKDAAAALKKLPPDVGVTEGIKLALKALAK.

The tract at residues 1-64 (MIGKLTGTLL…EDAQLLYGFG (64 aa)) is domain I. The segment at 65–143 (THSERQAFRE…ADTGAQSLFV (79 aa)) is domain II. The interval 144-148 (NNDQN) is flexible linker. The segment at 148–190 (NDIVQALMALGYSDKDAAAALKKLPPDVGVTEGIKLALKALAK) is domain III.

This sequence belongs to the RuvA family. As to quaternary structure, homotetramer. Forms an RuvA(8)-RuvB(12)-Holliday junction (HJ) complex. HJ DNA is sandwiched between 2 RuvA tetramers; dsDNA enters through RuvA and exits via RuvB. An RuvB hexamer assembles on each DNA strand where it exits the tetramer. Each RuvB hexamer is contacted by two RuvA subunits (via domain III) on 2 adjacent RuvB subunits; this complex drives branch migration. In the full resolvosome a probable DNA-RuvA(4)-RuvB(12)-RuvC(2) complex forms which resolves the HJ.

It localises to the cytoplasm. In terms of biological role, the RuvA-RuvB-RuvC complex processes Holliday junction (HJ) DNA during genetic recombination and DNA repair, while the RuvA-RuvB complex plays an important role in the rescue of blocked DNA replication forks via replication fork reversal (RFR). RuvA specifically binds to HJ cruciform DNA, conferring on it an open structure. The RuvB hexamer acts as an ATP-dependent pump, pulling dsDNA into and through the RuvAB complex. HJ branch migration allows RuvC to scan DNA until it finds its consensus sequence, where it cleaves and resolves the cruciform DNA. In Delftia acidovorans (strain DSM 14801 / SPH-1), this protein is Holliday junction branch migration complex subunit RuvA.